A 158-amino-acid polypeptide reads, in one-letter code: Transcription elongation factor GreA (158 aa).

It belongs to the GreA/GreB family.

Necessary for efficient RNA polymerase transcription elongation past template-encoded arresting sites. The arresting sites in DNA have the property of trapping a certain fraction of elongating RNA polymerases that pass through, resulting in locked ternary complexes. Cleavage of the nascent transcript by cleavage factors such as GreA or GreB allows the resumption of elongation from the new 3'terminus. GreA releases sequences of 2 to 3 nucleotides. This is Transcription elongation factor GreA from Pseudomonas syringae pv. tomato (strain ATCC BAA-871 / DC3000).